Reading from the N-terminus, the 473-residue chain is Photosystem II CP43 reaction center protein (473 aa).

The propeptide occupies methionine 1–glutamate 14. Position 15 is an N-acetylthreonine (threonine 15). The residue at position 15 (threonine 15) is a Phosphothreonine. Transmembrane regions (helical) follow at residues leucine 69–alanine 93, leucine 134–asparagine 155, lysine 178–threonine 200, lysine 255–serine 275, and tryptophan 291–alanine 312. A [CaMn4O5] cluster-binding site is contributed by glutamate 367. The chain crosses the membrane as a helical span at residues arginine 447–proline 471.

It belongs to the PsbB/PsbC family. PsbC subfamily. In terms of assembly, PSII is composed of 1 copy each of membrane proteins PsbA, PsbB, PsbC, PsbD, PsbE, PsbF, PsbH, PsbI, PsbJ, PsbK, PsbL, PsbM, PsbT, PsbX, PsbY, PsbZ, Psb30/Ycf12, at least 3 peripheral proteins of the oxygen-evolving complex and a large number of cofactors. It forms dimeric complexes. The cofactor is Binds multiple chlorophylls and provides some of the ligands for the Ca-4Mn-5O cluster of the oxygen-evolving complex. It may also provide a ligand for a Cl- that is required for oxygen evolution. PSII binds additional chlorophylls, carotenoids and specific lipids..

The protein resides in the plastid. The protein localises to the chloroplast thylakoid membrane. In terms of biological role, one of the components of the core complex of photosystem II (PSII). It binds chlorophyll and helps catalyze the primary light-induced photochemical processes of PSII. PSII is a light-driven water:plastoquinone oxidoreductase, using light energy to abstract electrons from H(2)O, generating O(2) and a proton gradient subsequently used for ATP formation. The chain is Photosystem II CP43 reaction center protein from Acorus calamus var. americanus (American sweet flag).